Consider the following 1135-residue polypeptide: Envelopment polyprotein (1135 aa).

A signal peptide spans 1–35; the sequence is MRILKLLELVVKVSLFTIALSSVLLAFLIFRATDA. Over 36-314 the chain is Lumenal; sequence KVEIIRGDHP…KYSKSIYKQT (279 aa). A Cell attachment site motif is present at residues 41–43; sequence RGD. 2 disulfides stabilise this stretch: cysteine 114-cysteine 145 and cysteine 122-cysteine 156. Asparagine 116 carries N-linked (GlcNAc...) asparagine; by host glycosylation. The segment at 177–195 is non-covalent dimerization; that stretch reads LDNKRHFSVGTKFFISESL. Asparagine 210 carries N-linked (GlcNAc...) asparagine; by host glycosylation. Cysteines 224 and 285 form a disulfide. The helical transmembrane segment at 315 to 366 threads the bilayer; it reads ACINFSWIRLILIALLIYFPIRWLVNKTTKPLFLWYDLIGLITYPILLLINC. Topologically, residues 367–484 are cytoplasmic; that stretch reads LWKYFPFKCS…VPGCPFLVTS (118 aa). Positions 437 to 484 are signal for signal peptide peptidase; it reads LSFSLLKFVTEILIGLIILSQMPMSMAQTTQCLSGCFYVPGCPFLVTS. The Lumenal portion of the chain corresponds to 485–1067; the sequence is KFEKCPERDQ…YFGSFFDTIR (583 aa). 3 N-linked (GlcNAc...) asparagine; by host glycosylation sites follow: asparagine 588, asparagine 605, and asparagine 980. A helical transmembrane segment spans residues 1068 to 1088; sequence VILLIAFIFLVIYFCSILTTI. The Cytoplasmic segment spans residues 1089 to 1135; the sequence is CKGYVKNESYKSRSKIEDDDDSEIKAPMLMKDTMTRRRPPMDFSHLV.

This sequence belongs to the tospovirus envelope glycoprotein family. Homodimer; disulfide-linked. Heterodimer with Glycoprotein C. Interacts with nucleoprotein. As to quaternary structure, heterodimer with Glycoprotein N. Interacts with nucleoprotein. Post-translationally, specific enzymatic cleavages in vivo yield mature proteins including Glycoprotein N and Glycoprotein C. In terms of processing, glycosylated with O-linked glycans. Glycosylation is essential for proper subcellular location. Cleaved at acidic pH.

The protein resides in the virion membrane. The protein localises to the host Golgi apparatus membrane. It localises to the host endoplasmic reticulum membrane. Forms the spikes present at the surface of the virion together with Glycoprotein C. They are able to attach the virion to a cell receptor and to promote fusion of membranes after endocytosis of the virion. Plays a role in virus binding and/or entry into the vector midgut. Its function is as follows. Forms the spikes present at the surface of the virion together with Glycoprotein N. They are able to attach the virion to a cell receptor and to promote fusion of membranes after endocytosis of the virion. Probable class II fusion protein. The chain is Envelopment polyprotein (GP) from Tomato spotted wilt virus (strain Regular2A) (TSWV).